Consider the following 223-residue polypeptide: GTP-binding nuclear protein Ran (223 aa).

Residues 8–172 (VVAEFKLVLV…LWILRKLTGD (165 aa)) form the Small GTPase Ran-type domain. 19-26 (DGGVGKTT) contacts GTP. The interval 38 to 46 (KRYIATQGV) is switch-I. GTP-binding positions include G69, 123–126 (NKVD), and 151–153 (SAK). The segment at 69-85 (GQEKLGGLREGYYIGAD) is switch-II.

Belongs to the small GTPase superfamily. Ran family. Monomer. Found in a nuclear export complex with RanGTP, exportin and pre-miRNA.

Its subcellular location is the nucleus. Functionally, GTP-binding protein involved in nucleocytoplasmic transport. Required for the import of protein into the nucleus and also for RNA export. Involved in chromatin condensation and control of cell cycle. In Tetrahymena pyriformis, this protein is GTP-binding nuclear protein Ran.